Consider the following 385-residue polypeptide: MSSTVLVINSGSSSLKFQLVEPVAGMSRAAGIVERIGERSSPVADHAQALHRAFKMLAEDGIDLQTCGLVAVGHRVVHGGTEFHQPTLLDDTVIGKLEELSALAPLHNPPAVLGIKVARRLLANVAHVAVFDTAFFHDLPPAAATYAIDRDVADRWHIRRYGFHGTSHQYVSERAAAFLGRPLDGLNQIVLHLGNGASASAIARGRPVETSMGLTPLEGLVMGTRSGDLDPGVISYLWRTARMGVEDIESMLNHRSGMLGLAGERDFRRLRLVIETGDRSAQLAYEVFIHRLRKYLGAYLAVLGHTDVVSFTAGIGENDAAVRRDALAGLQGLGIALDQDRNLGPGHGARRISSDDSPIAVLVVPTNEELAIARDCLRVLGGRRA.

Asparagine 9 lines the Mg(2+) pocket. Residue lysine 16 coordinates ATP. Arginine 75 lines the substrate pocket. Aspartate 132 serves as the catalytic Proton donor/acceptor. Residues 192-196 (HLGNG), 266-268 (DFR), and 314-318 (GIGEN) each bind ATP. Glutamate 368 serves as a coordination point for Mg(2+).

Belongs to the acetokinase family. As to quaternary structure, homodimer. Mg(2+) is required as a cofactor. It depends on Mn(2+) as a cofactor.

The protein resides in the cytoplasm. It carries out the reaction acetate + ATP = acetyl phosphate + ADP. It functions in the pathway metabolic intermediate biosynthesis; acetyl-CoA biosynthesis; acetyl-CoA from acetate: step 1/2. In terms of biological role, catalyzes the formation of acetyl phosphate from acetate and ATP. Can also catalyze the reverse reaction. This Mycobacterium bovis (strain ATCC BAA-935 / AF2122/97) protein is Acetate kinase.